A 358-amino-acid polypeptide reads, in one-letter code: DNA polymerase IV (358 aa).

A UmuC domain is found at 4-185; the sequence is IIHIDMDCYF…LSLRKIPGVG (182 aa). Asp8 and Asp103 together coordinate Mg(2+). Glu104 is a catalytic residue.

This sequence belongs to the DNA polymerase type-Y family. In terms of assembly, monomer. Requires Mg(2+) as cofactor.

Its subcellular location is the cytoplasm. The catalysed reaction is DNA(n) + a 2'-deoxyribonucleoside 5'-triphosphate = DNA(n+1) + diphosphate. Its function is as follows. Poorly processive, error-prone DNA polymerase involved in untargeted mutagenesis. Copies undamaged DNA at stalled replication forks, which arise in vivo from mismatched or misaligned primer ends. These misaligned primers can be extended by PolIV. Exhibits no 3'-5' exonuclease (proofreading) activity. May be involved in translesional synthesis, in conjunction with the beta clamp from PolIII. The chain is DNA polymerase IV from Shewanella baltica (strain OS195).